The sequence spans 298 residues: GTPase Era (298 aa).

Positions 3–170 (KSGFVAILGR…VQLLKDNLEE (168 aa)) constitute an Era-type G domain. Residues 11–18 (GRPNVGKS) form a G1 region. A GTP-binding site is contributed by 11-18 (GRPNVGKS). The interval 37 to 41 (QTTRN) is G2. The segment at 58 to 61 (DTPG) is G3. Residues 58–62 (DTPGI) and 120–123 (NKID) each bind GTP. The segment at 120-123 (NKID) is G4. The interval 149–151 (ISA) is G5. The KH type-2 domain occupies 201–279 (TQQEVPHSVA…YLETWVKVKK (79 aa)).

The protein belongs to the TRAFAC class TrmE-Era-EngA-EngB-Septin-like GTPase superfamily. Era GTPase family. In terms of assembly, monomer.

The protein localises to the cytoplasm. It localises to the cell membrane. Functionally, an essential GTPase that binds both GDP and GTP, with rapid nucleotide exchange. Plays a role in 16S rRNA processing and 30S ribosomal subunit biogenesis and possibly also in cell cycle regulation and energy metabolism. This Streptococcus equi subsp. zooepidemicus (strain MGCS10565) protein is GTPase Era.